A 293-amino-acid chain; its full sequence is Elongation factor Ts (293 aa).

Residues 80–83 (TDFV) form an involved in Mg(2+) ion dislocation from EF-Tu region.

Belongs to the EF-Ts family.

The protein localises to the cytoplasm. Associates with the EF-Tu.GDP complex and induces the exchange of GDP to GTP. It remains bound to the aminoacyl-tRNA.EF-Tu.GTP complex up to the GTP hydrolysis stage on the ribosome. The polypeptide is Elongation factor Ts (Paraburkholderia xenovorans (strain LB400)).